A 392-amino-acid chain; its full sequence is Succinyl-diaminopimelate desuccinylase (392 aa).

His-77 serves as a coordination point for Zn(2+). Residue Asp-79 is part of the active site. A Zn(2+)-binding site is contributed by Asp-110. Glu-144 serves as the catalytic Proton acceptor. Zn(2+)-binding residues include Glu-145, Glu-173, and His-359.

The protein belongs to the peptidase M20A family. DapE subfamily. Homodimer. The cofactor is Zn(2+). Requires Co(2+) as cofactor.

The catalysed reaction is N-succinyl-(2S,6S)-2,6-diaminopimelate + H2O = (2S,6S)-2,6-diaminopimelate + succinate. It functions in the pathway amino-acid biosynthesis; L-lysine biosynthesis via DAP pathway; LL-2,6-diaminopimelate from (S)-tetrahydrodipicolinate (succinylase route): step 3/3. Its function is as follows. Catalyzes the hydrolysis of N-succinyl-L,L-diaminopimelic acid (SDAP), forming succinate and LL-2,6-diaminopimelate (DAP), an intermediate involved in the bacterial biosynthesis of lysine and meso-diaminopimelic acid, an essential component of bacterial cell walls. In Thiobacillus denitrificans (strain ATCC 25259 / T1), this protein is Succinyl-diaminopimelate desuccinylase.